Consider the following 209-residue polypeptide: Large ribosomal subunit protein uL3 (209 aa).

The tract at residues 124-156 (KRHNFSGGQRTHGQSDRQRAPGSVGGSSDPSRV) is disordered.

It belongs to the universal ribosomal protein uL3 family. Part of the 50S ribosomal subunit. Forms a cluster with proteins L14 and L19.

One of the primary rRNA binding proteins, it binds directly near the 3'-end of the 23S rRNA, where it nucleates assembly of the 50S subunit. This Pelodictyon phaeoclathratiforme (strain DSM 5477 / BU-1) protein is Large ribosomal subunit protein uL3.